Consider the following 366-residue polypeptide: Methylthioribose-1-phosphate isomerase (366 aa).

Substrate is bound by residues 53–55 (RGA), Arg-90, and Gln-203. Residue Asp-244 is the Proton donor of the active site. Residue 254-255 (NK) participates in substrate binding.

It belongs to the eIF-2B alpha/beta/delta subunits family. MtnA subfamily.

The enzyme catalyses 5-(methylsulfanyl)-alpha-D-ribose 1-phosphate = 5-(methylsulfanyl)-D-ribulose 1-phosphate. It participates in amino-acid biosynthesis; L-methionine biosynthesis via salvage pathway; L-methionine from S-methyl-5-thio-alpha-D-ribose 1-phosphate: step 1/6. Its function is as follows. Catalyzes the interconversion of methylthioribose-1-phosphate (MTR-1-P) into methylthioribulose-1-phosphate (MTRu-1-P). The protein is Methylthioribose-1-phosphate isomerase of Methylocella silvestris (strain DSM 15510 / CIP 108128 / LMG 27833 / NCIMB 13906 / BL2).